Here is a 488-residue protein sequence, read N- to C-terminus: Neisserial heparin binding antigen (488 aa).

An N-terminal signal peptide occupies residues 1–17 (MFKRSVIAMACIFALSA). Residue cysteine 18 is the site of N-palmitoyl cysteine attachment. Cysteine 18 carries the S-diacylglycerol cysteine lipid modification. The segment at 21-201 (GGGGSPDVKS…NPAPANGGSN (181 aa)) is disordered. A compositionally biased stretch (basic and acidic residues) spans 43 to 53 (SEKETEAKEDA). A compositionally biased stretch (low complexity) spans 54-70 (PQAGSQGQGAPSAQGSQ). Polar residues-rich tracts occupy residues 101 to 118 (DMPQ…NHTP) and 127 to 142 (MENQ…QPAN). The segment covering 160 to 183 (AGGQNAGNTAAQGANQAGNNQAAG) has biased composition (low complexity). The Arg-rich motif motif lies at 296–306 (RFRRSARSRRS). Residues 306-488 (SLPAEMPLIP…GVFAGKKEQD (183 aa)) form a C1 fragment region.

The protein belongs to the NHBA family. The C-terminal beta-barrel forms a monomer. In terms of processing, cleaved in vivo by the Neisserial phase-variable autotransporter/serine protease NalP to give 2 fragments. The N-terminus remains in the cell outer membrane while the 22 kDa C-terminus (beginning on Ser-293) is soluble; this soluble fragment is called C2. Cleaved in vitro by human lactoferrin (LTF, between Arg-305 and Ser-306), this fragment is called C1. Cleavage by NalP or lactoferrin does not alter killing of Neisseria by bactericidal antibodies in vitro. Recombinant and cell surface protein is cleaved by human saliva kallikrein (KLK1) between Ser-303 and Arg-304; in saliva kallikrein is more active on NHBA than lactoferrin. Human plasma kallikrein (KLKB1) cleaves in a similar manner to KLK1.

The protein localises to the cell outer membrane. The protein resides in the cell surface. It localises to the host mitochondrion. In terms of biological role, a major human immunogenic protein detected in patients recovering from meningitidis, where it induces bactericidal antibodies. Binds heparin and heparan sulfate proteoglycan in vitro via the Arg-rich motif. Heparin-binding to this protein protects bacteria against killing by bactericidal antibodies (serum killing). Binds to human cells via the Arg-rich region; binding may require the intact protein as protein fragments do not bind to human cells. Protein binding to human cells is abolished by treatment with heparinase III but not chondroitinase ABC. The bacteria binds a number of human extracellular sialyated and/or sulfated glycans via this protein, including chondroitin sulfate (KD=5.2 nM), heparin (KD=52 nM) and ganglioside GT3 (KD=210 nM). The recombinant protein binds DNA non-specifically. Its function is as follows. Plays a role in extracellular-DNA (eDNA) mediated biofilm formation. In strain MC58 eDNA stimulates biofilm formation. When NHBA is not processed by NalP there is an increase in positively charged, NHBA- and IgA-derived DNA-binding peptides on the cell surface, resulting in increased DNA-binding peptides and increased biofilm formation. [C2 fragment] Localizes to host mitochondria when applied to the apical side of human endothelial cell layers, where it induces production of reactive oxygen species which lead to increased permeability of host endothelial cells. The C1 fragment (which lacks the first 14 residues of C2) does not have this effect. It is not known if this occurs during Neisseria infections. In Neisseria meningitidis serogroup B (strain ATCC BAA-335 / MC58), this protein is Neisserial heparin binding antigen.